Reading from the N-terminus, the 474-residue chain is Glycogen synthase (474 aa).

Lysine 12 contributes to the ADP-alpha-D-glucose binding site.

It belongs to the glycosyltransferase 1 family. Bacterial/plant glycogen synthase subfamily.

The catalysed reaction is [(1-&gt;4)-alpha-D-glucosyl](n) + ADP-alpha-D-glucose = [(1-&gt;4)-alpha-D-glucosyl](n+1) + ADP + H(+). Its pathway is glycan biosynthesis; glycogen biosynthesis. In terms of biological role, synthesizes alpha-1,4-glucan chains using ADP-glucose. The protein is Glycogen synthase of Xanthomonas axonopodis pv. citri (strain 306).